A 60-amino-acid chain; its full sequence is Cytotoxin 2 (60 aa).

4 disulfide bridges follow: Cys-3/Cys-21, Cys-14/Cys-38, Cys-42/Cys-53, and Cys-54/Cys-59.

The protein belongs to the three-finger toxin family. Short-chain subfamily. Type IA cytotoxin sub-subfamily. As to quaternary structure, monomer in solution; Homodimer and oligomer in the presence of negatively charged lipids forming a pore with a size ranging between 20 and 30 Angstroms. Expressed by the venom gland.

The protein localises to the secreted. It localises to the target cell membrane. Functionally, shows cytolytic activity on many different cells by forming pore in lipid membranes. In vivo, increases heart rate or kills the animal by cardiac arrest. In addition, it binds to heparin with high affinity, interacts with Kv channel-interacting protein 1 (KCNIP1) in a calcium-independent manner, and binds to integrin alpha-V/beta-3 (ITGAV/ITGB3) with moderate affinity. The protein is Cytotoxin 2 of Naja mossambica (Mozambique spitting cobra).